Here is a 428-residue protein sequence, read N- to C-terminus: Histidine--tRNA ligase (428 aa).

It belongs to the class-II aminoacyl-tRNA synthetase family. Homodimer.

The protein resides in the cytoplasm. The catalysed reaction is tRNA(His) + L-histidine + ATP = L-histidyl-tRNA(His) + AMP + diphosphate + H(+). This Ectopseudomonas mendocina (strain ymp) (Pseudomonas mendocina) protein is Histidine--tRNA ligase.